Here is a 586-residue protein sequence, read N- to C-terminus: Phosphomethylpyrimidine synthase (586 aa).

The segment at 1-59 (MKQSVSAEQIELKSSLPGSKKVYVDGPREGMKVPMREIEQSDTNGVPNPPIRVYDTSGP) is disordered. The segment covering 22 to 39 (VYVDGPREGMKVPMREIE) has biased composition (basic and acidic residues). Residues asparagine 193, methionine 222, tyrosine 251, histidine 287, 307–309 (SRG), 348–351 (DGLR), and glutamate 387 each bind substrate. Histidine 391 lines the Zn(2+) pocket. A substrate-binding site is contributed by tyrosine 414. Histidine 455 is a binding site for Zn(2+). [4Fe-4S] cluster contacts are provided by cysteine 535, cysteine 538, and cysteine 543.

Belongs to the ThiC family. [4Fe-4S] cluster is required as a cofactor.

The catalysed reaction is 5-amino-1-(5-phospho-beta-D-ribosyl)imidazole + S-adenosyl-L-methionine = 4-amino-2-methyl-5-(phosphooxymethyl)pyrimidine + CO + 5'-deoxyadenosine + formate + L-methionine + 3 H(+). It participates in cofactor biosynthesis; thiamine diphosphate biosynthesis. Functionally, catalyzes the synthesis of the hydroxymethylpyrimidine phosphate (HMP-P) moiety of thiamine from aminoimidazole ribotide (AIR) in a radical S-adenosyl-L-methionine (SAM)-dependent reaction. The polypeptide is Phosphomethylpyrimidine synthase (Bacillus cereus (strain ZK / E33L)).